The sequence spans 288 residues: 4-hydroxybenzoate octaprenyltransferase (288 aa).

Transmembrane regions (helical) follow at residues 33–53 (LWAL…AVFV), 99–119 (LFIV…TMTI), 163–183 (ESLP…AVAY), 213–233 (LIIG…GWLN), 234–254 (GLGW…GWQQ), and 268–288 (AFMN…MSYL).

It belongs to the UbiA prenyltransferase family. The cofactor is Mg(2+).

It is found in the cell inner membrane. The catalysed reaction is all-trans-octaprenyl diphosphate + 4-hydroxybenzoate = 4-hydroxy-3-(all-trans-octaprenyl)benzoate + diphosphate. It functions in the pathway cofactor biosynthesis; ubiquinone biosynthesis. Catalyzes the prenylation of para-hydroxybenzoate (PHB) with an all-trans polyprenyl group. Mediates the second step in the final reaction sequence of ubiquinone-8 (UQ-8) biosynthesis, which is the condensation of the polyisoprenoid side chain with PHB, generating the first membrane-bound Q intermediate 3-octaprenyl-4-hydroxybenzoate. In Klebsiella pneumoniae subsp. pneumoniae (strain ATCC 700721 / MGH 78578), this protein is 4-hydroxybenzoate octaprenyltransferase.